Reading from the N-terminus, the 465-residue chain is 3-isopropylmalate dehydratase large subunit (465 aa).

[4Fe-4S] cluster contacts are provided by C346, C406, and C409.

It belongs to the aconitase/IPM isomerase family. LeuC type 1 subfamily. Heterodimer of LeuC and LeuD. Requires [4Fe-4S] cluster as cofactor.

The catalysed reaction is (2R,3S)-3-isopropylmalate = (2S)-2-isopropylmalate. It participates in amino-acid biosynthesis; L-leucine biosynthesis; L-leucine from 3-methyl-2-oxobutanoate: step 2/4. Catalyzes the isomerization between 2-isopropylmalate and 3-isopropylmalate, via the formation of 2-isopropylmaleate. The protein is 3-isopropylmalate dehydratase large subunit of Leptospira interrogans serogroup Icterohaemorrhagiae serovar copenhageni (strain Fiocruz L1-130).